Reading from the N-terminus, the 381-residue chain is MYINYLKDLIGFKSVTPKSDGAIEYINDLLKQHGFKTEIKIFGDSKSEQVTNLYAVFGSNEPNICFVGHVDVVLAGNHELWHNASPFKVSQQDGKIYGRGAVDMKGAIACFLAASLDFIKNNTDFKGSISFLLTSDEEGKAKHGTKEMLQYIYDQGYKINFAIVGEPTCEKEIGDAIKIGRRGSVNFKLNIEGLSGHVAYPHKANNPLPCLIIILNELTNIKLDEGTEFFQRSNLEVTNIEVSNNTSNVIPASTEASFNIRFNNLHSAETLAKQVEEIIKQHCKEYKVDYKLEYSSSAESFIQNPSDKIKEFAKVVEHTLKIKPEFSTSGGTSDARFVKNYCPLVEFGLLSETAHKINEYTKISDLQKLYDVYYNFLMEIL.

His-69 provides a ligand contact to Zn(2+). Residue Asp-71 is part of the active site. Zn(2+) is bound at residue Asp-103. The active-site Proton acceptor is the Glu-137. The Zn(2+) site is built by Glu-138, Glu-166, and His-355.

Belongs to the peptidase M20A family. DapE subfamily. As to quaternary structure, homodimer. It depends on Zn(2+) as a cofactor. Co(2+) is required as a cofactor.

It catalyses the reaction N-succinyl-(2S,6S)-2,6-diaminopimelate + H2O = (2S,6S)-2,6-diaminopimelate + succinate. The protein operates within amino-acid biosynthesis; L-lysine biosynthesis via DAP pathway; LL-2,6-diaminopimelate from (S)-tetrahydrodipicolinate (succinylase route): step 3/3. In terms of biological role, catalyzes the hydrolysis of N-succinyl-L,L-diaminopimelic acid (SDAP), forming succinate and LL-2,6-diaminopimelate (DAP), an intermediate involved in the bacterial biosynthesis of lysine and meso-diaminopimelic acid, an essential component of bacterial cell walls. This Rickettsia africae (strain ESF-5) protein is Succinyl-diaminopimelate desuccinylase.